The following is a 450-amino-acid chain: Phosphomethylpyrimidine synthase (450 aa).

Substrate is bound by residues N80, M109, Y138, H173, 193–195, 234–237, and E273; these read SRG and DSLR. H277 is a binding site for Zn(2+). Y300 serves as a coordination point for substrate. Residue H341 coordinates Zn(2+). [4Fe-4S] cluster is bound by residues C421, C424, and C429.

This sequence belongs to the ThiC family. As to quaternary structure, homodimer. The cofactor is [4Fe-4S] cluster.

It carries out the reaction 5-amino-1-(5-phospho-beta-D-ribosyl)imidazole + S-adenosyl-L-methionine = 4-amino-2-methyl-5-(phosphooxymethyl)pyrimidine + CO + 5'-deoxyadenosine + formate + L-methionine + 3 H(+). It functions in the pathway cofactor biosynthesis; thiamine diphosphate biosynthesis. Functionally, catalyzes the synthesis of the hydroxymethylpyrimidine phosphate (HMP-P) moiety of thiamine from aminoimidazole ribotide (AIR) in a radical S-adenosyl-L-methionine (SAM)-dependent reaction. This chain is Phosphomethylpyrimidine synthase, found in Campylobacter fetus subsp. fetus (strain 82-40).